Consider the following 336-residue polypeptide: GTPase Obg (336 aa).

Residues M1–I159 form the Obg domain. The 168-residue stretch at A160 to D327 folds into the OBG-type G domain. Residues G166–S173, F191–H195, D212–G215, S279–D282, and S308–V310 each bind GTP. Mg(2+) contacts are provided by S173 and T193.

This sequence belongs to the TRAFAC class OBG-HflX-like GTPase superfamily. OBG GTPase family. As to quaternary structure, monomer. Mg(2+) is required as a cofactor.

The protein resides in the cytoplasm. An essential GTPase which binds GTP, GDP and possibly (p)ppGpp with moderate affinity, with high nucleotide exchange rates and a fairly low GTP hydrolysis rate. Plays a role in control of the cell cycle, stress response, ribosome biogenesis and in those bacteria that undergo differentiation, in morphogenesis control. The protein is GTPase Obg of Sinorhizobium medicae (strain WSM419) (Ensifer medicae).